Here is an 801-residue protein sequence, read N- to C-terminus: Cation/H(+) antiporter 28 (801 aa).

12 consecutive transmembrane segments (helical) span residues 24–44 (ALKI…HYLM), 77–97 (SITL…VMGL), 113–133 (FIAY…TPFL), 140–160 (PYIF…PILT), 179–199 (AAGV…FIFF), 216–236 (LLMF…SPIF), 252–272 (GSHL…PTWP), 275–292 (SMYN…FLPN), 304–324 (INYL…GFII), 343–363 (LLGT…LLLG), 371–391 (SLGL…ALAI), and 403–423 (LIIF…MDII).

It belongs to the monovalent cation:proton antiporter 2 (CPA2) transporter (TC 2.A.37) family. CHX (TC 2.A.37.4) subfamily. As to expression, specifically expressed in pollen.

Its subcellular location is the membrane. In terms of biological role, may operate as a cation/H(+) antiporter. The polypeptide is Cation/H(+) antiporter 28 (CHX28) (Arabidopsis thaliana (Mouse-ear cress)).